We begin with the raw amino-acid sequence, 636 residues long: Endoglucanase 4 (636 aa).

A signal peptide spans 1 to 25 (MTRRWSFLVQCFTFKKKEGVRSRYM). The active-site Nucleophile is the Asp82. Residues His400, Asp438, and Glu447 contribute to the active site. The 158-residue stretch at 478–635 (KVEDEFFVEA…GDLVFGTLPN (158 aa)) folds into the CBM3 domain.

The protein belongs to the glycosyl hydrolase 9 (cellulase E) family.

The protein resides in the secreted. The enzyme catalyses Endohydrolysis of (1-&gt;4)-beta-D-glucosidic linkages in cellulose, lichenin and cereal beta-D-glucans.. This chain is Endoglucanase 4, found in Bacillus sp. (strain KSM-522).